We begin with the raw amino-acid sequence, 541 residues long: Chaperonin GroEL (541 aa).

ATP is bound by residues 29 to 32, 86 to 90, Gly413, and Asp494; these read TIGP and DGTTT.

It belongs to the chaperonin (HSP60) family. In terms of assembly, forms a cylinder of 14 subunits composed of two heptameric rings stacked back-to-back. Interacts with the co-chaperonin GroES.

Its subcellular location is the cytoplasm. It carries out the reaction ATP + H2O + a folded polypeptide = ADP + phosphate + an unfolded polypeptide.. Together with its co-chaperonin GroES, plays an essential role in assisting protein folding. The GroEL-GroES system forms a nano-cage that allows encapsulation of the non-native substrate proteins and provides a physical environment optimized to promote and accelerate protein folding. The protein is Chaperonin GroEL of Lachnospira eligens (strain ATCC 27750 / DSM 3376 / VPI C15-48 / C15-B4) (Eubacterium eligens).